The primary structure comprises 291 residues: 33 kDa chaperonin (291 aa).

Disulfide bonds link Cys235/Cys237 and Cys268/Cys271.

Belongs to the HSP33 family. Under oxidizing conditions two disulfide bonds are formed involving the reactive cysteines. Under reducing conditions zinc is bound to the reactive cysteines and the protein is inactive.

It localises to the cytoplasm. Functionally, redox regulated molecular chaperone. Protects both thermally unfolding and oxidatively damaged proteins from irreversible aggregation. Plays an important role in the bacterial defense system toward oxidative stress. The sequence is that of 33 kDa chaperonin from Bacillus pumilus (strain SAFR-032).